The sequence spans 284 residues: ASC1-like protein 3 (284 aa).

6 consecutive transmembrane segments (helical) span residues 9-29 (SSFFPLTLVFSVGFFCARFFL), 69-89 (LTYYGSVQAWVLLIIKQEPWS), 108-128 (LMLFYMCQCGFYIYSIFALVA), 148-168 (ILIGYAYLTGFFRIGTIILAL), 195-215 (FGLFALSWLLLRLIYFPFWII), and 243-263 (MLLTLLVFHIYWWKLICLMIM). A TLC domain is found at 60–267 (VKFSESIWKL…ICLMIMKQLN (208 aa)).

The protein localises to the endoplasmic reticulum membrane. Functionally, mediates resistance to sphinganine-analog mycotoxins (SAMs) by restoring the sphingolipid biosynthesis. Could salvage the transport of GPI-anchored proteins from the endoplasmic reticulum to the Golgi apparatus in ceramides-depleted cells after SAM exposure. The sequence is that of ASC1-like protein 3 from Oryza sativa subsp. japonica (Rice).